Here is a 368-residue protein sequence, read N- to C-terminus: 2-aminoethylphosphonate--pyruvate transaminase (368 aa).

Lys192 carries the N6-(pyridoxal phosphate)lysine modification.

Belongs to the class-V pyridoxal-phosphate-dependent aminotransferase family. PhnW subfamily. Homodimer. Pyridoxal 5'-phosphate is required as a cofactor.

The catalysed reaction is (2-aminoethyl)phosphonate + pyruvate = phosphonoacetaldehyde + L-alanine. Functionally, involved in phosphonate degradation. The sequence is that of 2-aminoethylphosphonate--pyruvate transaminase from Pseudomonas putida (strain W619).